The following is a 350-amino-acid chain: tRNA uridine(34) hydroxylase (350 aa).

The 95-residue stretch at 146–240 (DDPDALFIDM…YARKAREQGL (95 aa)) folds into the Rhodanese domain. Cysteine 200 functions as the Cysteine persulfide intermediate in the catalytic mechanism.

It belongs to the TrhO family.

It carries out the reaction uridine(34) in tRNA + AH2 + O2 = 5-hydroxyuridine(34) in tRNA + A + H2O. In terms of biological role, catalyzes oxygen-dependent 5-hydroxyuridine (ho5U) modification at position 34 in tRNAs, the first step in 5-carboxymethoxyuridine (cmo5U) biosynthesis. May be part of an alternate pathway, which is able to bypass cmo5U biogenesis in a subset of tRNAs under aerobic conditions. The chain is tRNA uridine(34) hydroxylase from Escherichia coli (strain K12).